A 468-amino-acid polypeptide reads, in one-letter code: MGWRQLDIDKVHLALIVAGGFITFFCYFSEVFRKKLLVGEAVLGSITGLIFGPHAAKLVDPFSWGDHGDYLTVEICRIVLDVRVFASAIELPGAYFQHNFRSIIVMLLPVMAYGWLVTAGFAYALFPQINFLGSLLIAGCITSTDPVLSALIVGEGPLAKKTPERIRSLLIAESGCNDGMAVPFFYFAIKLLTVKPSRNAGRDWVLLVVLYECAFGIFFGCVIGYLLSFILKHAQKYRLIDAISYYSLPLAIPLLCSGIGTIIGVDDLLMSFFAGILFNWNDLFSKNISACSVPAFIDQTFSLLFFTYYGTIIPWNNFNWSVEGLPVWRLIVFSILTLVCRRLPVVFSVKPLVPDIKTWKEALFVGHFGPIGVCAVYMAFLAKLLLSPDEIEKSIYESTTVFSTLNEIIWPIISFVILSSIIVHGFSIHVLVIWGKLKSLYLNRKVTKSDSDLELQVIGVDKSQEDYV.

Transmembrane regions (helical) follow at residues 12-32 (HLAL…SEVF), 36-56 (LLVG…PHAA), 81-96 (DVRV…GAYF), 103-123 (IIVM…GFAY), 133-153 (GSLL…ALIV), 169-189 (LLIA…YFAI), 204-224 (WVLL…CVIG), and 258-278 (GIGT…GILF). N-linked (GlcNAc...) asparagine glycosylation occurs at asparagine 287. Residues 293–313 (VPAFIDQTFSLLFFTYYGTII) traverse the membrane as a helical segment. N-linked (GlcNAc...) asparagine glycosylation occurs at asparagine 319. A run of 3 helical transmembrane segments spans residues 320–340 (WSVE…TLVC), 362–382 (ALFV…AFLA), and 408–428 (IIWP…GFSI). 2 positions are modified to phosphoserine: serine 449 and serine 451.

Belongs to the fungal Na(+)/H(+) exchanger family.

It localises to the cell membrane. In terms of biological role, sodium export from cell, takes up external protons in exchange for internal sodium ions. Involved in regulation of pH. The polypeptide is Na(+)/H(+) antiporter (Schizosaccharomyces pombe (strain 972 / ATCC 24843) (Fission yeast)).